Reading from the N-terminus, the 212-residue chain is Ribonuclease HII (212 aa).

In terms of domain architecture, RNase H type-2 spans 18–212 (GCVFGVDEAG…APVAQQELFR (195 aa)). Residues Asp24, Glu25, and Asp118 each coordinate a divalent metal cation.

It belongs to the RNase HII family. Mn(2+) serves as cofactor. The cofactor is Mg(2+).

The protein resides in the cytoplasm. It catalyses the reaction Endonucleolytic cleavage to 5'-phosphomonoester.. Its function is as follows. Endonuclease that specifically degrades the RNA of RNA-DNA hybrids. The sequence is that of Ribonuclease HII from Erythrobacter litoralis (strain HTCC2594).